The following is a 526-amino-acid chain: NAD(P)H-quinone oxidoreductase chain 4 1 (526 aa).

A run of 14 helical transmembrane segments spans residues 7–27 (FPWL…IPLL), 35–55 (WYAL…FGWH), 86–106 (LSFP…VAAW), 114–134 (LFFF…LAQD), 135–155 (LLLF…LIAI), 168–188 (FILY…AMAF), 208–228 (ALQI…LPVF), 242–262 (SAPI…YGLI), 276–296 (FAPV…LAAL), 310–330 (IAHM…GLNG), 331–351 (ALLQ…LTGI), 374–396 (AFAL…GFVG), 417–437 (GIAL…LSML), and 463–483 (MAVA…PRLA).

The protein belongs to the complex I subunit 4 family.

The protein resides in the cellular thylakoid membrane. The enzyme catalyses a plastoquinone + NADH + (n+1) H(+)(in) = a plastoquinol + NAD(+) + n H(+)(out). It catalyses the reaction a plastoquinone + NADPH + (n+1) H(+)(in) = a plastoquinol + NADP(+) + n H(+)(out). Functionally, NDH-1 shuttles electrons from NAD(P)H, via FMN and iron-sulfur (Fe-S) centers, to quinones in the respiratory chain. The immediate electron acceptor for the enzyme in this species is believed to be plastoquinone. Couples the redox reaction to proton translocation (for every two electrons transferred, four hydrogen ions are translocated across the cytoplasmic membrane), and thus conserves the redox energy in a proton gradient. The protein is NAD(P)H-quinone oxidoreductase chain 4 1 of Synechococcus sp. (strain JA-3-3Ab) (Cyanobacteria bacterium Yellowstone A-Prime).